The chain runs to 345 residues: tRNA-specific 2-thiouridylase MnmA (345 aa).

ATP-binding positions include 6 to 13 (AMSGGVDS) and Leu-32. The active-site Nucleophile is Cys-100. Cys-100 and Cys-197 are joined by a disulfide. Gly-124 is a binding site for ATP. Residues 146-148 (RDQ) are interaction with tRNA. The active-site Cysteine persulfide intermediate is Cys-197.

It belongs to the MnmA/TRMU family.

Its subcellular location is the cytoplasm. The enzyme catalyses S-sulfanyl-L-cysteinyl-[protein] + uridine(34) in tRNA + AH2 + ATP = 2-thiouridine(34) in tRNA + L-cysteinyl-[protein] + A + AMP + diphosphate + H(+). Its function is as follows. Catalyzes the 2-thiolation of uridine at the wobble position (U34) of tRNA, leading to the formation of s(2)U34. This chain is tRNA-specific 2-thiouridylase MnmA, found in Acidiphilium cryptum (strain JF-5).